The chain runs to 180 residues: ATP-dependent protease subunit HslV (180 aa).

Thr-5 is a catalytic residue. Na(+)-binding residues include Gly-161, Cys-164, and Thr-167.

The protein belongs to the peptidase T1B family. HslV subfamily. In terms of assembly, a double ring-shaped homohexamer of HslV is capped on each side by a ring-shaped HslU homohexamer. The assembly of the HslU/HslV complex is dependent on binding of ATP.

It is found in the cytoplasm. The catalysed reaction is ATP-dependent cleavage of peptide bonds with broad specificity.. Its activity is regulated as follows. Allosterically activated by HslU binding. Functionally, protease subunit of a proteasome-like degradation complex believed to be a general protein degrading machinery. In Campylobacter lari (strain RM2100 / D67 / ATCC BAA-1060), this protein is ATP-dependent protease subunit HslV.